A 1357-amino-acid polypeptide reads, in one-letter code: DNA-directed RNA polymerase subunit beta (1357 aa).

Belongs to the RNA polymerase beta chain family. In terms of assembly, the RNAP catalytic core consists of 2 alpha, 1 beta, 1 beta' and 1 omega subunit. When a sigma factor is associated with the core the holoenzyme is formed, which can initiate transcription.

It catalyses the reaction RNA(n) + a ribonucleoside 5'-triphosphate = RNA(n+1) + diphosphate. Functionally, DNA-dependent RNA polymerase catalyzes the transcription of DNA into RNA using the four ribonucleoside triphosphates as substrates. In Pseudomonas savastanoi pv. phaseolicola (strain 1448A / Race 6) (Pseudomonas syringae pv. phaseolicola (strain 1448A / Race 6)), this protein is DNA-directed RNA polymerase subunit beta.